We begin with the raw amino-acid sequence, 147 residues long: Basic phospholipase A2 beta-bungarotoxin A1 chain (147 aa).

An N-terminal signal peptide occupies residues 1-19 (MYPAHLLILSAVCVSLLGA). Residues 20-27 (ANIPPHPL) constitute a propeptide that is removed on maturation. Cystine bridges form between cysteine 54–cysteine 146, cysteine 56–cysteine 72, cysteine 71–cysteine 127, cysteine 78–cysteine 120, cysteine 88–cysteine 113, and cysteine 106–cysteine 118. Positions 55, 57, and 59 each coordinate Ca(2+). Residue histidine 75 is part of the active site. A Ca(2+)-binding site is contributed by aspartate 76. Aspartate 121 is a catalytic residue.

The protein belongs to the phospholipase A2 family. Group I subfamily. D49 sub-subfamily. As to quaternary structure, heterodimer; disulfide-linked. The A chains have phospholipase A2 activity and the B chains show homology with the basic protease inhibitors. Ca(2+) serves as cofactor. As to expression, expressed by the venom gland.

The protein resides in the secreted. It catalyses the reaction a 1,2-diacyl-sn-glycero-3-phosphocholine + H2O = a 1-acyl-sn-glycero-3-phosphocholine + a fatty acid + H(+). Functionally, snake venom phospholipase A2 (PLA2) that inhibits neuromuscular transmission by blocking acetylcholine release from the nerve termini. PLA2 catalyzes the calcium-dependent hydrolysis of the 2-acyl groups in 3-sn-phosphoglycerides. This Bungarus caeruleus (Indian krait) protein is Basic phospholipase A2 beta-bungarotoxin A1 chain.